A 906-amino-acid polypeptide reads, in one-letter code: Glutamate receptor 1 (906 aa).

A signal peptide spans 1 to 18 (MQHIFAFFCTGFLGAVVG). Topologically, residues 19–536 (ANFPNNIQIG…GVFSFLDPLA (518 aa)) are extracellular. N-linked (GlcNAc...) asparagine glycosylation is found at Asn-63, Asn-249, Asn-257, Asn-363, Asn-401, and Asn-406. A disulfide bridge connects residues Cys-75 and Cys-323. Residues Pro-492, Thr-494, and Arg-499 each contribute to the L-glutamate site. The helical transmembrane segment at 537–557 (YEIWMCIVFAYIGVSVVLFLV) threads the bilayer. The Cytoplasmic portion of the chain corresponds to 558-584 (SRFSPYEWHSEEFEEGRDQTTSDQSNE). An intramembrane region (helical; Pore-forming) is located at residues 585–600 (FGIFNSLWFSLGAFMQ). The stretch at 601–603 (QGC) is an intramembrane region. The S-palmitoyl cysteine moiety is linked to residue Cys-603. The Cytoplasmic portion of the chain corresponds to 604 to 609 (DISPRS). Residues 610 to 630 (LSGRIVGGVWWFFTLIIISSY) form a helical membrane-spanning segment. The Extracellular segment spans residues 631-805 (TANLAAFLTV…DKTSALSLSN (175 aa)). Ser-645 is subject to Phosphoserine. Residues Ser-668 and Thr-669 each coordinate L-glutamate. Position 710 is a phosphoserine (Ser-710). An L-glutamate-binding site is contributed by Glu-719. A disulfide bond links Cys-732 and Cys-787. A helical transmembrane segment spans residues 806–826 (VAGVFYILIGGLGLAMLVALI). The Cytoplasmic segment spans residues 827–906 (EFCYKSRSES…SGMPLGATGL (80 aa)). Cys-829 carries the S-palmitoyl cysteine lipid modification. Residues Ser-849 and Ser-863 each carry the phosphoserine modification. The tract at residues 861–880 (RNSGAGASSGGSGENGRVVS) is disordered. Residues 903–906 (ATGL) carry the PDZ-binding motif.

The protein belongs to the glutamate-gated ion channel (TC 1.A.10.1) family. GRIA1 subfamily. In terms of assembly, homotetramer or heterotetramer of pore-forming glutamate receptor subunits; heteromeric assembly can be the result of both receptor subtype and flip or flop form and according the composition, one partner can be dominant with respect to the fast desensitizing current component, whereas the other can determine the steady-state component. Tetramers may be formed by the dimerization of dimers. Found in a complex with GRIA2, GRIA3, GRIA4, CNIH2, CNIH3, CACNG2, CACNG3, CACNG4, CACNG5, CACNG7 and CACNG8. Interacts with HIP1 and RASGRF2. Interacts with SYNDIG1 and GRIA2. Interacts with DLG1 (via C-terminus). Interacts with LRFN1. Interacts with PRKG2. Interacts with CNIH2 and CACNG2. Interacts with CACNG5; this interaction modulates the gating. Interacts (via C-terminus) with PDLIM4 (via LIM domain); this interaction as well as the interaction of PDLIM4 with alpha-actinin is required for their colocalization in early endosomes. Interacts with SNX27 (via PDZ domain); the interaction is required for recycling to the plasma membrane when endocytosed and prevent degradation in lysosomes. Interacts (via PDZ-binding motif) with SHANK3 (via PDZ domain). Interacts with CACNG3; associates GRIA1 with the adapter protein complex 4 (AP-4) to target GRIA1 to the somatodendritic compartment of neurons. Interacts with CACNG2; this interaction mediates traffick to the plasma membrane and modulation of desensitization. Interacts with CNIH2 and CNIH3; this interaction promotes expression at the plasma membrane and extensively modulates their gating properties by slowing deactivation and desensitization kinetics. Found in a complex with GRIA2, GRIA3, GRIA4, DLG4, CACNG8 and CNIH2. Post-translationally, palmitoylated. Depalmitoylated by CPT1C and upon L-glutamate stimulation. ZDHHC3/GODZ specifically palmitoylates Cys-603, which leads to Golgi retention and decreased cell surface expression. In contrast, Cys-829 palmitoylation does not affect cell surface expression but regulates stimulation-dependent endocytosis. Phosphorylated at Ser-645. Phosphorylated at Ser-710 by PKC. Phosphorylated at Ser-849 by PKC, PKA and CAMK2. Phosphorylated at Ser-863 by PKC, PKA and PRKG2. Phosphorylation of Ser-863 is reduced by induction of long-term depression and increased by induction of long-term potentiation. In terms of tissue distribution, widely expressed in brain.

Its subcellular location is the cell membrane. It localises to the endoplasmic reticulum membrane. It is found in the postsynaptic cell membrane. The protein localises to the postsynaptic density membrane. The protein resides in the cell projection. Its subcellular location is the dendrite. It localises to the dendritic spine. It is found in the early endosome membrane. The protein localises to the recycling endosome membrane. The protein resides in the presynapse. Its subcellular location is the synapse. The catalysed reaction is Ca(2+)(in) = Ca(2+)(out). It carries out the reaction Na(+)(in) = Na(+)(out). The enzyme catalyses Mg(2+)(in) = Mg(2+)(out). It catalyses the reaction Li(+)(in) = Li(+)(out). The catalysed reaction is K(+)(in) = K(+)(out). It carries out the reaction Sr(2+)(in) = Sr(2+)(out). Its function is as follows. Ionotropic glutamate receptor that functions as a ligand-gated cation channel, gated by L-glutamate and glutamatergic agonists such as alpha-amino-3-hydroxy-5-methyl-4-isoxazolepropionic acid (AMPA), quisqualic acid, and kainic acid. L-glutamate acts as an excitatory neurotransmitter at many synapses in the central nervous system. Binding of the excitatory neurotransmitter L-glutamate induces a conformation change, leading to the opening of the cation channel, and thereby converts the chemical signal to an electrical impulse upon entry of monovalent and divalent cations such as sodium and calcium. The receptor then desensitizes rapidly and enters in a transient inactive state, characterized by the presence of bound agonist. In the presence of CACNG2 or CACNG4 or CACNG7 or CACNG8, shows resensitization which is characterized by a delayed accumulation of current flux upon continued application of L-glutamate. Resensitization is blocked by CNIH2 through interaction with CACNG8 in the CACNG8-containing AMPA receptors complex. Calcium (Ca(2+)) permeability depends on subunits composition and, heteromeric channels containing edited GRIA2 subunit are calcium-impermeable. Also permeable to other divalents cations such as strontium(2+) and magnesium(2+) and monovalent cations such as potassium(1+) and lithium(1+). The chain is Glutamate receptor 1 from Homo sapiens (Human).